Reading from the N-terminus, the 296-residue chain is AUGMIN subunit 2 (296 aa).

2 coiled-coil regions span residues 56 to 83 (DDLI…QGRK) and 253 to 285 (AVHK…NRRL). A disordered region spans residues 218–296 (AVSLPTTPGG…WPPSVKKSSV (79 aa)). Residues 264–277 (QNEEEEEEEEEEDG) are compositionally biased toward acidic residues.

It belongs to the HAUS2 family. As to quaternary structure, part of the augmin complex composed of 8 subunits. The complex acts on microtubules and interacts with gamma-tubulin in spindles and the phragmoplast.

Contributes to the assembly of the acentrosomal spindle and phragmoplast microtubule arrays as part of the augmin complex. The chain is AUGMIN subunit 2 from Arabidopsis thaliana (Mouse-ear cress).